The sequence spans 152 residues: MTEYKKVIAQNKKALFNYFIAERLEAGIVLKGSEVRSLRQGKASIEESHAADTGHEVFLYNCHIAEYEKANRFNHATRRPRKLLLHTKEIKKIIGRIRIKGYTLVALSMYFNKKNKVKVELGIAKGKKLHDKRESIKEKDWKRDQSRLIRQK.

This sequence belongs to the SmpB family.

It is found in the cytoplasm. Required for rescue of stalled ribosomes mediated by trans-translation. Binds to transfer-messenger RNA (tmRNA), required for stable association of tmRNA with ribosomes. tmRNA and SmpB together mimic tRNA shape, replacing the anticodon stem-loop with SmpB. tmRNA is encoded by the ssrA gene; the 2 termini fold to resemble tRNA(Ala) and it encodes a 'tag peptide', a short internal open reading frame. During trans-translation Ala-aminoacylated tmRNA acts like a tRNA, entering the A-site of stalled ribosomes, displacing the stalled mRNA. The ribosome then switches to translate the ORF on the tmRNA; the nascent peptide is terminated with the 'tag peptide' encoded by the tmRNA and targeted for degradation. The ribosome is freed to recommence translation, which seems to be the essential function of trans-translation. This chain is SsrA-binding protein, found in Rickettsia africae (strain ESF-5).